Here is a 598-residue protein sequence, read N- to C-terminus: NADH-quinone oxidoreductase subunit C/D (598 aa).

Residues 1-189 form an NADH dehydrogenase I subunit C region; sequence MTDLTTSDSL…DPYVLTKQKE (189 aa). Positions 213 to 598 are NADH dehydrogenase I subunit D; that stretch reads DFMFLNLGPN…IDFVMSDVDR (386 aa).

The protein in the N-terminal section; belongs to the complex I 30 kDa subunit family. In the C-terminal section; belongs to the complex I 49 kDa subunit family. NDH-1 is composed of 13 different subunits. Subunits NuoB, CD, E, F, and G constitute the peripheral sector of the complex.

It is found in the cell inner membrane. The catalysed reaction is a quinone + NADH + 5 H(+)(in) = a quinol + NAD(+) + 4 H(+)(out). NDH-1 shuttles electrons from NADH, via FMN and iron-sulfur (Fe-S) centers, to quinones in the respiratory chain. The immediate electron acceptor for the enzyme in this species is believed to be ubiquinone. Couples the redox reaction to proton translocation (for every two electrons transferred, four hydrogen ions are translocated across the cytoplasmic membrane), and thus conserves the redox energy in a proton gradient. This is NADH-quinone oxidoreductase subunit C/D from Yersinia pseudotuberculosis serotype O:1b (strain IP 31758).